The primary structure comprises 76 residues: UPF0248 protein MmarC7_1289 (76 aa).

This sequence belongs to the UPF0248 family.

The sequence is that of UPF0248 protein MmarC7_1289 from Methanococcus maripaludis (strain C7 / ATCC BAA-1331).